A 208-amino-acid chain; its full sequence is Ribonuclease HII (208 aa).

One can recognise an RNase H type-2 domain in the interval 18 to 208 (GFYAGVDEVG…RPVKERLEAC (191 aa)). 3 residues coordinate a divalent metal cation: Asp-24, Glu-25, and Asp-116.

Belongs to the RNase HII family. Mn(2+) serves as cofactor. It depends on Mg(2+) as a cofactor.

The protein resides in the cytoplasm. The enzyme catalyses Endonucleolytic cleavage to 5'-phosphomonoester.. Endonuclease that specifically degrades the RNA of RNA-DNA hybrids. This is Ribonuclease HII from Shewanella loihica (strain ATCC BAA-1088 / PV-4).